A 216-amino-acid polypeptide reads, in one-letter code: Probable nicotinate-nucleotide adenylyltransferase (216 aa).

It belongs to the NadD family.

The enzyme catalyses nicotinate beta-D-ribonucleotide + ATP + H(+) = deamido-NAD(+) + diphosphate. Its pathway is cofactor biosynthesis; NAD(+) biosynthesis; deamido-NAD(+) from nicotinate D-ribonucleotide: step 1/1. Catalyzes the reversible adenylation of nicotinate mononucleotide (NaMN) to nicotinic acid adenine dinucleotide (NaAD). This chain is Probable nicotinate-nucleotide adenylyltransferase, found in Klebsiella pneumoniae (strain 342).